A 118-amino-acid polypeptide reads, in one-letter code: HTH-type transcriptional regulator SarT (118 aa).

Positions 55 to 78 (MRDIISYIGIDQSRIVKSVKDLSK) form a DNA-binding region, H-T-H motif.

Belongs to the SarA family.

It is found in the cytoplasm. Its function is as follows. Transcriptional regulator acting as an intermediary between major regulators sarA and agr and virulence genes. Represses alpha-hemolysin (hla) gene expression. Down-regulates agr RNAIII expression by repressing sarU, a positive activator of agr expression. Up-regulates sarS, which induces the expression of the cell wall-associated protein A (spa). This chain is HTH-type transcriptional regulator SarT (sarT), found in Staphylococcus aureus (strain NCTC 8325 / PS 47).